Reading from the N-terminus, the 265-residue chain is 4-hydroxy-tetrahydrodipicolinate reductase (265 aa).

Residues 7-12 (GASGRM), aspartate 33, 96-98 (GTT), and 120-123 (AANF) contribute to the NAD(+) site. Histidine 153 (proton donor/acceptor) is an active-site residue. Residue histidine 154 coordinates (S)-2,3,4,5-tetrahydrodipicolinate. Lysine 157 (proton donor) is an active-site residue. Residue 163 to 164 (GT) participates in (S)-2,3,4,5-tetrahydrodipicolinate binding.

Belongs to the DapB family.

It is found in the cytoplasm. It catalyses the reaction (S)-2,3,4,5-tetrahydrodipicolinate + NAD(+) + H2O = (2S,4S)-4-hydroxy-2,3,4,5-tetrahydrodipicolinate + NADH + H(+). It carries out the reaction (S)-2,3,4,5-tetrahydrodipicolinate + NADP(+) + H2O = (2S,4S)-4-hydroxy-2,3,4,5-tetrahydrodipicolinate + NADPH + H(+). It functions in the pathway amino-acid biosynthesis; L-lysine biosynthesis via DAP pathway; (S)-tetrahydrodipicolinate from L-aspartate: step 4/4. In terms of biological role, catalyzes the conversion of 4-hydroxy-tetrahydrodipicolinate (HTPA) to tetrahydrodipicolinate. This is 4-hydroxy-tetrahydrodipicolinate reductase from Cupriavidus necator (strain ATCC 17699 / DSM 428 / KCTC 22496 / NCIMB 10442 / H16 / Stanier 337) (Ralstonia eutropha).